A 715-amino-acid chain; its full sequence is L-type lectin-domain containing receptor kinase VIII.1 (715 aa).

A signal peptide spans 1 to 21 (MSLFLSFFISILLCFFNGATT). Residues 22 to 247 (TQFDFSTLAI…IHSIEWWSFS (226 aa)) form a legume-lectin like region. At 22–317 (TQFDFSTLAI…SRFCKENPGT (296 aa)) the chain is on the extracellular side. N-linked (GlcNAc...) asparagine glycans are attached at residues Asn-126 and Asn-195. The disordered stretch occupies residues 255–296 (GSGSGSPPPRANLMNPKANSVKSPPPLASQPSSSAIPISSNT). Positions 283-296 (SQPSSSAIPISSNT) are enriched in low complexity. The helical transmembrane segment at 318 to 338 (IAGVVTAGAFFLALFAGALFW) threads the bilayer. Over 339–715 (VYSKKFKRVE…IIRSDDDHLV (377 aa)) the chain is Cytoplasmic. In terms of domain architecture, Protein kinase spans 376–676 (FNESRIIGHG…MSFSTSHLLL (301 aa)). Residues 382 to 390 (IGHGAFGVV) and Lys-405 contribute to the ATP site. The active-site Proton acceptor is the Asp-500.

The protein in the C-terminal section; belongs to the protein kinase superfamily. Ser/Thr protein kinase family. It in the N-terminal section; belongs to the leguminous lectin family.

It is found in the cell membrane. It catalyses the reaction L-seryl-[protein] + ATP = O-phospho-L-seryl-[protein] + ADP + H(+). It carries out the reaction L-threonyl-[protein] + ATP = O-phospho-L-threonyl-[protein] + ADP + H(+). This is L-type lectin-domain containing receptor kinase VIII.1 (LECRK81) from Arabidopsis thaliana (Mouse-ear cress).